Here is a 472-residue protein sequence, read N- to C-terminus: Sarcalumenin (472 aa).

Positions 1–19 are cleaved as a signal peptide; sequence MRALLLFCFVASLLLSGQA. The Dynamin-type G domain maps to 89–330; sequence ITSKPMVLFL…IENRLENKIA (242 aa). Residues 99–106 form a G1 motif region; it reads GPWSVGKS. The N-linked (GlcNAc...) asparagine glycan is linked to Ser-102. Positions 127–128 are G2 motif; the sequence is EP. Residues 189–192 form a G3 motif region; sequence DTPG. The segment at 254–257 is G4 motif; that stretch reads NKAD. Pro-277 is a region of interest (G5 motif). Asn-280 and Asn-388 each carry an N-linked (GlcNAc...) asparagine glycan.

Belongs to the TRAFAC class dynamin-like GTPase superfamily. Dynamin/Fzo/YdjA family. Post-translationally, N-glycosylated. In terms of tissue distribution, detected in skeletal muscle.

It localises to the sarcoplasmic reticulum lumen. The protein resides in the sarcoplasmic reticulum membrane. This Oryctolagus cuniculus (Rabbit) protein is Sarcalumenin (SRL).